A 1077-amino-acid chain; its full sequence is Mitogen-activated protein kinase kinase kinase 9 (1077 aa).

Residues 1 to 40 (MESSRSLLGCLASATAAPPGDDATGAGAEEEEDEEEAAAE) form a disordered region. The span at 14 to 27 (ATAAPPGDDATGAG) shows a compositional bias: low complexity. A compositionally biased stretch (acidic residues) spans 28-38 (AEEEEDEEEAA). Residues 45–109 (AALPYWTAVF…PSNYVTPRSA (65 aa)) enclose the SH3 domain. Residues 137–405 (LTLEEIIGIG…LTTIEESGFF (269 aa)) enclose the Protein kinase domain. Residues 143–151 (IGIGGFGKV) and K164 each bind ATP. D261 (proton acceptor) is an active-site residue. A phosphothreonine; by autocatalysis mark is found at T297 and T298. S301 is subject to Phosphoserine; by autocatalysis. T305 carries the phosphothreonine; by autocatalysis modification. Leucine-zipper regions lie at residues 423–444 (IQEM…EEEL) and 458–479 (LRRR…ELNI). Basic residues predominate over residues 491 to 503 (VKKRKGKFRKSRL). Disordered regions lie at residues 491-511 (VKKR…GNRI), 526-606 (SPTM…TSGD), 646-713 (EDED…KRGG), 748-790 (LPPE…KKEE), 860-971 (RDPN…PRPS), and 986-1011 (SHAR…CFAS). Residue S526 is modified to Phosphoserine. Composition is skewed to polar residues over residues 559 to 568 (PGESSKTWGR) and 693 to 709 (PVNS…TNSL). The span at 755–767 (PPAREEKKRREGL) shows a compositional bias: basic and acidic residues. The segment covering 863–880 (NQSLTPTHVTLTAPTQPS) has biased composition (polar residues). Positions 901 to 915 (GSRSPSSNGMSPSPG) are enriched in low complexity. Over residues 987-1011 (HARSASPANSSSTETPSNLDSCFAS) the composition is skewed to polar residues.

The protein belongs to the protein kinase superfamily. STE Ser/Thr protein kinase family. MAP kinase kinase kinase subfamily. Homodimer. Requires Mg(2+) as cofactor. In terms of processing, autophosphorylation on serine and threonine residues within the activation loop plays a role in enzyme activation. Thr-305 is likely to be the main autophosphorylation site. Autophosphorylation also occurs on Thr-297 and Ser-301. As to expression, expressed in cochlea and utricle.

The enzyme catalyses L-seryl-[protein] + ATP = O-phospho-L-seryl-[protein] + ADP + H(+). The catalysed reaction is L-threonyl-[protein] + ATP = O-phospho-L-threonyl-[protein] + ADP + H(+). With respect to regulation, homodimerization via the leucine zipper domains is required for autophosphorylation of multiple sites in the activation loop and subsequent activation. Autophosphorylation at Thr-305 is the key step in activation of MAP3K9/MLK1 and is required for full phosphorylation. Autophosphorylation at Thr-297 and Ser-301 have been shown to be of secondary importance in the activation of MAP3K9/MLK1. Its function is as follows. Serine/threonine kinase which acts as an essential component of the MAP kinase signal transduction pathway. Plays an important role in the cascades of cellular responses evoked by changes in the environment. Once activated, acts as an upstream activator of the MKK/JNK signal transduction cascade through the phosphorylation of MAP2K4/MKK4 and MAP2K7/MKK7 which in turn activate the JNKs. The MKK/JNK signaling pathway regulates stress response via activator protein-1 (JUN) and GATA4 transcription factors. Also plays a role in mitochondrial death signaling pathway, including the release cytochrome c, leading to apoptosis. This Mus musculus (Mouse) protein is Mitogen-activated protein kinase kinase kinase 9 (Map3k9).